A 366-amino-acid chain; its full sequence is tRNA/tmRNA (uracil-C(5))-methyltransferase (366 aa).

Positions 190, 218, 223, 239, and 299 each coordinate S-adenosyl-L-methionine. Residue Cys-324 is the Nucleophile of the active site. Catalysis depends on Glu-358, which acts as the Proton acceptor.

It belongs to the class I-like SAM-binding methyltransferase superfamily. RNA M5U methyltransferase family. TrmA subfamily.

It carries out the reaction uridine(54) in tRNA + S-adenosyl-L-methionine = 5-methyluridine(54) in tRNA + S-adenosyl-L-homocysteine + H(+). The catalysed reaction is uridine(341) in tmRNA + S-adenosyl-L-methionine = 5-methyluridine(341) in tmRNA + S-adenosyl-L-homocysteine + H(+). Its function is as follows. Dual-specificity methyltransferase that catalyzes the formation of 5-methyluridine at position 54 (m5U54) in all tRNAs, and that of position 341 (m5U341) in tmRNA (transfer-mRNA). This chain is tRNA/tmRNA (uracil-C(5))-methyltransferase, found in Citrobacter koseri (strain ATCC BAA-895 / CDC 4225-83 / SGSC4696).